A 651-amino-acid chain; its full sequence is Bromodomain-containing protein 7 (651 aa).

A Glycyl lysine isopeptide (Lys-Gly) (interchain with G-Cter in SUMO2) cross-link involves residue K21. A compositionally biased stretch (polar residues) spans 35–45 (TELSTGSSGHD). The tract at residues 35-132 (TELSTGSSGH…SSLAKQEEVE (98 aa)) is disordered. Residues 47–57 (SLFEDKNDHDK) are compositionally biased toward basic and acidic residues. K52 participates in a covalent cross-link: Glycyl lysine isopeptide (Lys-Gly) (interchain with G-Cter in SUMO2). The segment covering 58–69 (HKDRKRKKRKKG) has biased composition (basic residues). The Nuclear localization signal motif lies at 65–96 (KRKKGEKQIPGEEKGRKRRRVKEDKKKRDRDR). Residues 70 to 106 (EKQIPGEEKGRKRRRVKEDKKKRDRDRVENEAEKDLQ) show a composition bias toward basic and acidic residues. Glycyl lysine isopeptide (Lys-Gly) (interchain with G-Cter in SUMO2) cross-links involve residues K127, K186, K197, K201, K212, and K241. The region spanning 131–235 (VEQTPLQEAL…HSGMKILSQE (105 aa)) is the Bromo domain. Residues 253–312 (TRKQKDGTDTSQSGEDGGCWQREREDSGDAEAHASKSPSKENKKKDNDMLEDKFKSNNLE) form a disordered region. A compositionally biased stretch (basic and acidic residues) spans 273–312 (QREREDSGDAEAHASKSPSKENKKKDNDMLEDKFKSNNLE). Phosphoserine is present on residues S279 and S289. Residues K305 and K307 each participate in a glycyl lysine isopeptide (Lys-Gly) (interchain with G-Cter in SUMO2) cross-link. Position 328 is an N6-acetyllysine (K328). K344 is covalently cross-linked (Glycyl lysine isopeptide (Lys-Gly) (interchain with G-Cter in SUMO2)). At S380 the chain carries Phosphoserine. K389 is covalently cross-linked (Glycyl lysine isopeptide (Lys-Gly) (interchain with G-Cter in SUMO2)). S482 bears the Phosphoserine mark. Position 514 is a phosphothreonine (T514). The stretch at 536 to 567 (SEEAEIFQKKLDETTRLLRELQEAQNERLSTR) forms a coiled coil. The residue at position 621 (S621) is a Phosphoserine.

In terms of assembly, interacts with TRIM24, PTPN13 and DVL1. Identified in a complex with SMARCA4/BRG1, SMARCC1/BAF155, SMARCE1/BAF57, DPF2/BAF45D and ARID2, subunits of the SWI/SNF-B (PBAF) chromatin remodeling complex. Interacts with IRF2 and HNRPUL1. Interacts (via N-terminus) with TP53. Interacts (via C-terminus) with EP300. Interacts with BRCA1. Interacts (via bromo domain) with histone H3 (via N-terminus) acetylated at 'Lys-14' (H3K14ac). Has low affinity for histone H3 acetylated at 'Lys-9' (H3K9ac). Has the highest affinity for histone H3 that is acetylated both at 'Lys-9' (H3K9ac) and at 'Lys-14' (H3K14ac). Has very low affinity for non-acetylated histone H3. Interacts (via bromo domain) with histone H4 (via N-terminus) acetylated at 'Lys-8' (H3K8ac) (in vitro).

The protein localises to the nucleus. It is found in the chromosome. Functionally, acts both as coactivator and as corepressor. May play a role in chromatin remodeling. Activator of the Wnt signaling pathway in a DVL1-dependent manner by negatively regulating the GSK3B phosphotransferase activity. Induces dephosphorylation of GSK3B at 'Tyr-216'. Down-regulates TRIM24-mediated activation of transcriptional activation by AR. Transcriptional corepressor that down-regulates the expression of target genes. Binds to target promoters, leading to increased histone H3 acetylation at 'Lys-9' (H3K9ac). Binds to the ESR1 promoter. Recruits BRCA1 and POU2F1 to the ESR1 promoter. Coactivator for TP53-mediated activation of transcription of a set of target genes. Required for TP53-mediated cell-cycle arrest in response to oncogene activation. Promotes acetylation of TP53 at 'Lys-382', and thereby promotes efficient recruitment of TP53 to target promoters. Inhibits cell cycle progression from G1 to S phase. The protein is Bromodomain-containing protein 7 (BRD7) of Pongo abelii (Sumatran orangutan).